The following is a 105-amino-acid chain: Putative zinc finger protein 861 (105 aa).

The C2H2-type zinc-finger motif lies at 75–97 (YTCKPCGNAFRFHHSFHIHERPH).

The sequence is that of Putative zinc finger protein 861 (ZNF861P) from Homo sapiens (Human).